The following is a 325-amino-acid chain: Heme A synthase (325 aa).

5 helical membrane passes run 6-26 (WLAV…FTRL), 88-108 (LVGR…FVVG), 116-136 (LRLC…WYMV), 155-175 (LFCA…PTVI), and 184-204 (LVGC…GLVA). A heme-binding site is contributed by His-246. 3 helical membrane passes run 248-268 (MSAF…FFYD), 275-295 (VFLV…TLLF), and 297-317 (IPID…GICV). Residue His-305 participates in heme binding.

The protein belongs to the COX15/CtaA family. Type 2 subfamily. Interacts with CtaB. Requires heme b as cofactor.

The protein localises to the cell membrane. The enzyme catalyses Fe(II)-heme o + 2 A + H2O = Fe(II)-heme a + 2 AH2. It functions in the pathway porphyrin-containing compound metabolism; heme A biosynthesis; heme A from heme O: step 1/1. Functionally, catalyzes the conversion of heme O to heme A by two successive hydroxylations of the methyl group at C8. The first hydroxylation forms heme I, the second hydroxylation results in an unstable dihydroxymethyl group, which spontaneously dehydrates, resulting in the formyl group of heme A. This chain is Heme A synthase, found in Neorickettsia sennetsu (strain ATCC VR-367 / Miyayama) (Ehrlichia sennetsu).